The sequence spans 1207 residues: DNA-directed RNA polymerase, mitochondrial (1207 aa).

The N-terminal 41 residues, 1 to 41, are a transit peptide targeting the mitochondrion; that stretch reads MSALRWTRSAAGLGRVLRSPGPHRPPSEEGTFGGFCSSRRS. Disordered stretches follow at residues 1–48 and 82–103; these read MSAL…SPRE and KKVQ…KLEA. 2 PPR repeats span residues 232–266 and 267–302; these read TLHM…GLSP and DLCS…GFQP. The tract at residues 702–724 is disordered; sequence VPPPRSEAPRPARYQLPPGSTPV. Positions 773 to 1207 are mediates interaction with TEFM; sequence FRGRTYPCPP…QVIRSTYFFS (435 aa). Residues Asp893, Lys962, and Asp1121 contribute to the active site.

The protein belongs to the phage and mitochondrial RNA polymerase family. In terms of assembly, homodimer. Component of the mitochondrial transcription initiation complex, composed at least of TFB2M, TFAM and POLRMT. In this complex TFAM recruits POLRMT to the promoter whereas TFB2M induces structural changes in POLRMT to enable promoter opening and trapping of the DNA non-template strand. Upon metabolic stress, forms a complex composed of FOXO3, SIRT3 and mitochondrial RNA polymerase POLRMT; the complex is recruited to mtDNA in a SIRT3-dependent manner. Also forms a complex composed of FOXO3, SIRT3, TFAM and POLRMT. Interacts with TFB1M and TFB2M, leading to the stimulation of transcription. Interacts with TEFM. Interacts with MTRES1.

The protein localises to the mitochondrion. It carries out the reaction RNA(n) + a ribonucleoside 5'-triphosphate = RNA(n+1) + diphosphate. Functionally, DNA-dependent RNA polymerase catalyzes the transcription of mitochondrial DNA into RNA using the four ribonucleoside triphosphates as substrates. Component of the mitochondrial transcription initiation complex, composed at least of TFB2M, TFAM and POLRMT that is required for basal transcription of mitochondrial DNA. In this complex, TFAM recruits POLRMT to a specific promoter whereas TFB2M induces structural changes in POLRMT to enable promoter opening and trapping of the DNA non-template strand. Has DNA primase activity. Catalyzes the synthesis of short RNA primers that are necessary for the initiation of lagging-strand DNA synthesis from the origin of light-strand DNA replication (OriL). The protein is DNA-directed RNA polymerase, mitochondrial of Mus musculus (Mouse).